The sequence spans 274 residues: Shikimate dehydrogenase (NADP(+)) (274 aa).

Residues 15–17 (SKS) and threonine 62 contribute to the shikimate site. Residue lysine 66 is the Proton acceptor of the active site. Residue aspartate 78 coordinates NADP(+). 2 residues coordinate shikimate: asparagine 87 and aspartate 102. NADP(+) is bound by residues 127–131 (GAGGA) and methionine 215. Tyrosine 217 provides a ligand contact to shikimate. Residue glycine 239 participates in NADP(+) binding.

The protein belongs to the shikimate dehydrogenase family. Homodimer.

It catalyses the reaction shikimate + NADP(+) = 3-dehydroshikimate + NADPH + H(+). It participates in metabolic intermediate biosynthesis; chorismate biosynthesis; chorismate from D-erythrose 4-phosphate and phosphoenolpyruvate: step 4/7. Functionally, involved in the biosynthesis of the chorismate, which leads to the biosynthesis of aromatic amino acids. Catalyzes the reversible NADPH linked reduction of 3-dehydroshikimate (DHSA) to yield shikimate (SA). The sequence is that of Shikimate dehydrogenase (NADP(+)) from Dechloromonas aromatica (strain RCB).